We begin with the raw amino-acid sequence, 695 residues long: Elongation factor G 1 (695 aa).

In terms of domain architecture, tr-type G spans 6-284 (KKVRNIGISA…VTRYLPCPAD (279 aa)). GTP-binding positions include 15-22 (AHIDSGKT), 82-86 (DTPGH), and 136-139 (NKCD).

The protein belongs to the TRAFAC class translation factor GTPase superfamily. Classic translation factor GTPase family. EF-G/EF-2 subfamily.

The protein resides in the cytoplasm. In terms of biological role, catalyzes the GTP-dependent ribosomal translocation step during translation elongation. During this step, the ribosome changes from the pre-translocational (PRE) to the post-translocational (POST) state as the newly formed A-site-bound peptidyl-tRNA and P-site-bound deacylated tRNA move to the P and E sites, respectively. Catalyzes the coordinated movement of the two tRNA molecules, the mRNA and conformational changes in the ribosome. The sequence is that of Elongation factor G 1 from Syntrophus aciditrophicus (strain SB).